The sequence spans 192 residues: Signal peptidase complex catalytic subunit SEC11C (192 aa).

Over 2-28 (VRAGAVGTHLPASGLDIFGDLRKMNKR) the chain is Cytoplasmic. The helical; Signal-anchor for type II membrane protein transmembrane segment at 29 to 48 (QLYYQVLNFAMIVSSALMIW) threads the bilayer. The Lumenal portion of the chain corresponds to 49 to 192 (KGLIVLTGSE…GAYVLLKRES (144 aa)). Active-site charge relay system residues include S68, H108, and D134. The interval 177 to 188 (ALLAVMGAYVLL) is C-terminal short (CTS) helix.

It belongs to the peptidase S26B family. As to quaternary structure, component of the signal peptidase complex paralog C (SPC-C) composed of a catalytic subunit SEC11C and three accessory subunits SPCS1, SPCS2 and SPCS3. Within the complex, interacts with SPCS2 and SPCS3. The complex induces a local thinning of the ER membrane which is used to measure the length of the signal peptide (SP) h-region of protein substrates. This ensures the selectivity of the complex towards h-regions shorter than 18-20 amino acids. May undergo processing at the N-terminus.

It is found in the endoplasmic reticulum membrane. It carries out the reaction Cleavage of hydrophobic, N-terminal signal or leader sequences from secreted and periplasmic proteins.. Its function is as follows. Catalytic component of the signal peptidase complex (SPC) which catalyzes the cleavage of N-terminal signal sequences from nascent proteins as they are translocated into the lumen of the endoplasmic reticulum. Specifically cleaves N-terminal signal peptides that contain a hydrophobic alpha-helix (h-region) shorter than 18-20 amino acids. This is Signal peptidase complex catalytic subunit SEC11C (SEC11C) from Canis lupus familiaris (Dog).